The following is a 615-amino-acid chain: (+)-alpha-pinene synthase TPS2, chloroplastic (615 aa).

A chloroplast-targeting transit peptide spans 1 to 55 (MHCMAVRHFAPSSSLSIFSSTNINNHFFGREIFTPKTSNITTKKSRSRPNCNPIQ). 5 residues coordinate (2E)-geranyl diphosphate: Arg-330, Asp-367, Asp-371, Arg-509, and Asp-512. 2 residues coordinate Mg(2+): Asp-367 and Asp-371. The short motif at 367–371 (DDIYD) is the DDXXD motif element. Residues Asp-512, Thr-516, and Glu-520 each coordinate Mg(2+).

This sequence belongs to the terpene synthase family. Tpsb subfamily. It depends on Mg(2+) as a cofactor. Mn(2+) serves as cofactor. K(+) is required as a cofactor. Trichome.

The protein resides in the plastid. The protein localises to the chloroplast. It catalyses the reaction (2E)-geranyl diphosphate = (1R,5R)-alpha-pinene + diphosphate. The catalysed reaction is (2E)-geranyl diphosphate = (1R,5R)-beta-pinene + diphosphate. It carries out the reaction (2E)-geranyl diphosphate = (4S)-limonene + diphosphate. The enzyme catalyses (2E)-geranyl diphosphate = beta-myrcene + diphosphate. It participates in secondary metabolite biosynthesis; terpenoid biosynthesis. It functions in the pathway terpene metabolism; (-)-alpha-pinene biosynthesis; (-)-alpha-pinene from geranyl diphosphate: step 1/1. In terms of biological role, involved in monoterpene (C10) olefins biosynthesis, constituants of cannabinoids and terpenoids-rich resins. Catalyzes mainly the conversion of (2E)-geranyl diphosphate to (+)-alpha-pinene, and also produces minor products such as (-)-limonene, (+)-beta-pinene and beta-myrcene. The sequence is that of (+)-alpha-pinene synthase TPS2, chloroplastic from Cannabis sativa (Hemp).